A 257-amino-acid polypeptide reads, in one-letter code: tRNA pseudouridine synthase A (257 aa).

Catalysis depends on D53, which acts as the Nucleophile. Y111 lines the substrate pocket.

Belongs to the tRNA pseudouridine synthase TruA family. In terms of assembly, homodimer.

It carries out the reaction uridine(38/39/40) in tRNA = pseudouridine(38/39/40) in tRNA. Formation of pseudouridine at positions 38, 39 and 40 in the anticodon stem and loop of transfer RNAs. This is tRNA pseudouridine synthase A from Xanthomonas euvesicatoria pv. vesicatoria (strain 85-10) (Xanthomonas campestris pv. vesicatoria).